A 156-amino-acid chain; its full sequence is MPRRRVIGQRKILPDPKFKSELLAKFVNILMVDGKKSTAEKIVYTALDTMAEKSGKDHLAVFEEALENVRPAVEVKSRRVGGSTYQVPVEVRPVRRNALAMRWLVEAARKRGEKSMAARLAAEMLDAAENKGSAVKKREDVHRMAEANKAFAHYRW.

Belongs to the universal ribosomal protein uS7 family. Part of the 30S ribosomal subunit. Contacts proteins S9 and S11.

Functionally, one of the primary rRNA binding proteins, it binds directly to 16S rRNA where it nucleates assembly of the head domain of the 30S subunit. Is located at the subunit interface close to the decoding center, probably blocks exit of the E-site tRNA. This is Small ribosomal subunit protein uS7 from Vibrio cholerae serotype O1 (strain ATCC 39315 / El Tor Inaba N16961).